An 835-amino-acid polypeptide reads, in one-letter code: Phosphatidylinositol 4-kinase beta (835 aa).

Disordered regions lie at residues 1–61 (MGDT…PLDV), 99–139 (SSAS…VRRR), and 267–341 (PSSQ…PVRL). Positions 19 to 59 (SPSTSTTSSLSLPSSPSSGPHPLTSSSPSTSEGLPTSSPPL) are enriched in low complexity. In terms of domain architecture, PIK helical spans 59-262 (LDVISEGLGE…GTKLRKLILS (204 aa)). 2 stretches are compositionally biased toward basic and acidic residues: residues 125 to 134 (ISEEEVEPIK) and 267 to 276 (PSSQRIRREV). The segment covering 277–288 (PQPPPPYPPPLH) has biased composition (pro residues). Positions 311-332 (DATVSISLSSNLKRTASNPKVE) are enriched in polar residues. The 267-residue stretch at 554 to 820 (EPWQEKVRRI…MVDGSMRSIT (267 aa)) folds into the PI3K/PI4K catalytic domain. Residues 560 to 566 (VRRIREG) form a G-loop region. Residues 687-695 (QVKDRHNGN) are catalytic loop. The segment at 706 to 730 (HIDFGFILSSSPRNLGFETSAFKLT) is activation loop.

Belongs to the PI3/PI4-kinase family. Type III PI4K subfamily. Mg(2+) serves as cofactor. Requires Mn(2+) as cofactor. In terms of tissue distribution, expressed in the inner ear otic vesicles.

It is found in the endomembrane system. The protein resides in the mitochondrion outer membrane. It localises to the rough endoplasmic reticulum membrane. It carries out the reaction a 1,2-diacyl-sn-glycero-3-phospho-(1D-myo-inositol) + ATP = a 1,2-diacyl-sn-glycero-3-phospho-(1D-myo-inositol 4-phosphate) + ADP + H(+). Phosphorylates phosphatidylinositol (PI) in the first committed step in the production of the second messenger inositol-1,4,5,-trisphosphate (PIP). May play an important role the in inner ear development. This is Phosphatidylinositol 4-kinase beta (pi4kb) from Danio rerio (Zebrafish).